The primary structure comprises 316 residues: Olfactory receptor 4N4 (316 aa).

Residues 1 to 25 lie on the Extracellular side of the membrane; that stretch reads MKIANNTVVTEFILLGLTQSQDIQL. N-linked (GlcNAc...) asparagine glycosylation is present at Asn-5. The helical transmembrane segment at 26-49 threads the bilayer; sequence LVFVLILIFYLIILPGNFLIIFTI. The Cytoplasmic portion of the chain corresponds to 50-57; the sequence is RSDPGLTA. The helical transmembrane segment at 58–79 threads the bilayer; sequence PLYLFLGNLAFLDASYSFIVAP. The Extracellular segment spans residues 80-100; it reads RMLVDFLSEKKVISYRGCITQ. Cys-97 and Cys-189 are oxidised to a cystine. Residues 101–120 traverse the membrane as a helical segment; it reads LFFLHFLGGGEGLLLVVMAF. The Cytoplasmic segment spans residues 121–139; the sequence is DRYIAICRPLHCSTVMNPR. Residues 140-158 form a helical membrane-spanning segment; it reads ACYAMMLALWLGGFVHSII. Residues 159-195 are Extracellular-facing; that stretch reads QVVLILRLPFCGPNQLDNFFCDVRQVIKLACTDMFVV. The chain crosses the membrane as a helical span at residues 196-219; it reads ELLMVFNSGLMTLLCFLGLLASYA. Residues 220–235 lie on the Cytoplasmic side of the membrane; the sequence is VILCHVRRAASEGKNK. A helical membrane pass occupies residues 236-258; sequence AMSTCTTRVIIILLMFGPAIFIY. At 259 to 269 the chain is on the extracellular side; it reads MCPFRALPADK. A helical membrane pass occupies residues 270-289; it reads MVSLFHTVIFPLMNPMIYTL. Residues 290–316 lie on the Cytoplasmic side of the membrane; the sequence is RNQEVKTSMKRLLSRHVVCQVDFIIRN.

Belongs to the G-protein coupled receptor 1 family.

The protein localises to the cell membrane. In terms of biological role, odorant receptor. The chain is Olfactory receptor 4N4 (OR4N4) from Homo sapiens (Human).